The following is a 628-amino-acid chain: Voltage-gated potassium channel KCNC4 (628 aa).

Disordered stretches follow at residues 1–24 (MISS…SKTC) and 62–88 (LAWL…GSSG). The tract at residues 1 to 28 (MISSVCVSSYRGRKSGNKPPSKTCLKEE) is inactivation gate. Over 1–230 (MISSVCVSSY…EDPYSSRAAR (230 aa)) the chain is Cytoplasmic. A phosphoserine mark is found at Ser-8, Ser-9, Ser-15, and Ser-21. A compositionally biased stretch (gly residues) spans 77–88 (DGGGAGSSGSSG). Zn(2+) contacts are provided by His-120, Cys-126, Cys-147, and Cys-148. Residues 231 to 251 (VVAFASLFFILVSITTFCLET) form a helical membrane-spanning segment. Asn-260 and Asn-269 each carry an N-linked (GlcNAc...) asparagine glycan. The chain crosses the membrane as a helical span at residues 282–302 (EPILTYIEGVCVMWFTLEFLV). The Cytoplasmic segment spans residues 303–316 (RIVCCPDTLDFVKN). The chain crosses the membrane as a helical span at residues 317–337 (LLNIIDFVAILPFYLEVGLSG). The chain crosses the membrane as a helical; Voltage-sensor span at residues 349 to 368 (FLRVVRFVRILRIFKLTRHF). Residues 369–384 (VGLRVLGHTLRASTNE) are Cytoplasmic-facing. Residues 385 to 405 (FLLLIIFLALGVLIFATMIYY) form a helical membrane-spanning segment. 4 residues coordinate K(+): Thr-440, Leu-441, Gly-442, and Tyr-443. The short motif at 440-445 (TLGYGD) is the Selectivity filter element. Residues 456–476 (VGALCALAGVLTIAMPVPVIV) form a helical membrane-spanning segment. Topologically, residues 477 to 628 (NNFGMYYSLA…CVPVSHTCAL (152 aa)) are cytoplasmic. The interval 493-584 (PKKRKKHVPR…RRALRRSGTR (92 aa)) is disordered. Residues 531–546 (AREEGVVERKRADSKQ) show a composition bias toward basic and acidic residues.

The protein belongs to the potassium channel family. C (Shaw) (TC 1.A.1.2) subfamily. Kv3.4/KCNC4 sub-subfamily. Homotetramer. Heterotetramer of potassium channel proteins. In terms of processing, phosphorylation of serine residues in the inactivation gate inhibits rapid channel closure.

Its subcellular location is the membrane. It carries out the reaction K(+)(in) = K(+)(out). In terms of biological role, voltage-gated potassium channel that opens in response to the voltage difference across the membrane, forming a potassium-selective channel through which potassium ions pass in accordance with their electrochemical gradient. The channel displays rapid activation and inactivation kinetics. The polypeptide is Voltage-gated potassium channel KCNC4 (Mus musculus (Mouse)).